A 920-amino-acid chain; its full sequence is Anoctamin-4 (920 aa).

Residues 1 to 323 lie on the Cytoplasmic side of the membrane; that stretch reads METSSSGITN…LYFAWLGWYT (323 aa). Residues 38–64 are disordered; the sequence is KDDDSLLHPGNLTSTSDDASRLEAGGE. The helical transmembrane segment at 324-344 threads the bilayer; it reads GMLFPAAFIGLFVFLYGVITL. At 345 to 389 the chain is on the extracellular side; sequence DHCQVSKEVCQATDIIMCPVCDKYCPFMRLSDSCVYAKVTHLFDN. Residues 390-410 traverse the membrane as a helical segment; it reads GATVFFAVFMAVWATVFLEFW. Residues 411–470 are Cytoplasmic-facing; it reads KRRRAVIAYDWDLIDWEEEEEEIRPQFEAKYSKKERMNPISGKPEPYQAFADKCSRLIVS. A helical transmembrane segment spans residues 471–491; that stretch reads ASGIFFMICVVIAAVFGIVIY. Residues 492 to 512 lie on the Extracellular side of the membrane; sequence RVVTVSTFAAFKWALIRNNSQ. Asparagine 509 is a glycosylation site (N-linked (GlcNAc...) asparagine). The chain crosses the membrane as a helical span at residues 513-533; sequence VATTGTAVCINFCIIMLLNVL. Over 534-560 the chain is Cytoplasmic; that stretch reads YEKVALLLTNLEQPRTESEWENSFTLK. Residues 561–581 traverse the membrane as a helical segment; it reads MFLFQFVNLNSSTFYIAFFLG. At 582–680 the chain is on the extracellular side; it reads RFTGHPGAYL…AYGLFDEYLE (99 aa). The chain crosses the membrane as a helical span at residues 681 to 701; it reads MILQFGFTTIFVAAFPLAPLL. Topologically, residues 702–733 are cytoplasmic; that stretch reads ALLNNIIEIRLDAYKFVTQWRRPLASRAKDIG. The helical transmembrane segment at 734-754 threads the bilayer; that stretch reads IWYGILEGIGILSVITNAFVI. Topologically, residues 755–850 are extracellular; that stretch reads AITSDFIPRL…QFWHVLAARL (96 aa). 2 N-linked (GlcNAc...) asparagine glycosylation sites follow: asparagine 789 and asparagine 802. A helical transmembrane segment spans residues 851 to 871; it reads AFIIVFEHLVFCIKHLISYLI. Residues 872–920 lie on the Cytoplasmic side of the membrane; it reads PDLPKDLRDRMRREKYLIQEMMYEAELERLQKERKERKKNGKAHHNEWP.

This sequence belongs to the anoctamin family.

Its subcellular location is the cell membrane. It carries out the reaction a 1,2-diacyl-sn-glycero-3-phospho-L-serine(in) = a 1,2-diacyl-sn-glycero-3-phospho-L-serine(out). The catalysed reaction is a beta-D-galactosyl-(1&lt;-&gt;1')-N-acylsphing-4-enine(out) = a beta-D-galactosyl-(1&lt;-&gt;1')-N-acylsphing-4-enine(in). The enzyme catalyses a 1,2-diacyl-sn-glycero-3-phosphocholine(in) = a 1,2-diacyl-sn-glycero-3-phosphocholine(out). In terms of biological role, has calcium-dependent phospholipid scramblase activity; scrambles phosphatidylserine, phosphatidylcholine and galactosylceramide. Does not exhibit calcium-activated chloride channel (CaCC) activity. The sequence is that of Anoctamin-4 from Bos taurus (Bovine).